The sequence spans 321 residues: Carnitine monooxygenase reductase subunit (321 aa).

The region spanning 4–109 (YQMFEVQVSQ…STPNNLFALI (106 aa)) is the FAD-binding FR-type domain. Residues 233–321 (DAFTLVLARS…AKGKRLVLDL (89 aa)) form the 2Fe-2S ferredoxin-type domain. Cys-270, Cys-275, Cys-278, and Cys-308 together coordinate [2Fe-2S] cluster.

The protein belongs to the PDR/VanB family. CntB subfamily. In terms of assembly, composed of an oxygenase subunit (yeaW) and a reductase subunit (yeaX). FMN is required as a cofactor. The cofactor is [2Fe-2S] cluster.

The enzyme catalyses (R)-carnitine + NADH + O2 + H(+) = (3R)-3-hydroxy-4-oxobutanoate + trimethylamine + NAD(+) + H2O. The catalysed reaction is (R)-carnitine + NADPH + O2 + H(+) = (3R)-3-hydroxy-4-oxobutanoate + trimethylamine + NADP(+) + H2O. It functions in the pathway amine and polyamine metabolism; carnitine metabolism. Functionally, converts carnitine to trimethylamine and malic semialdehyde. Can also use gamma-butyrobetaine, choline and betaine as substrates. This chain is Carnitine monooxygenase reductase subunit (yeaX), found in Escherichia coli (strain K12).